Here is a 318-residue protein sequence, read N- to C-terminus: Acetyl-coenzyme A carboxylase carboxyl transferase subunit alpha (318 aa).

Positions 38–292 (KLEKRLAKLE…NKTITKSLHA (255 aa)) constitute a CoA carboxyltransferase C-terminal domain.

The protein belongs to the AccA family. As to quaternary structure, acetyl-CoA carboxylase is a heterohexamer composed of biotin carboxyl carrier protein (AccB), biotin carboxylase (AccC) and two subunits each of ACCase subunit alpha (AccA) and ACCase subunit beta (AccD).

It localises to the cytoplasm. The catalysed reaction is N(6)-carboxybiotinyl-L-lysyl-[protein] + acetyl-CoA = N(6)-biotinyl-L-lysyl-[protein] + malonyl-CoA. The protein operates within lipid metabolism; malonyl-CoA biosynthesis; malonyl-CoA from acetyl-CoA: step 1/1. Component of the acetyl coenzyme A carboxylase (ACC) complex. First, biotin carboxylase catalyzes the carboxylation of biotin on its carrier protein (BCCP) and then the CO(2) group is transferred by the carboxyltransferase to acetyl-CoA to form malonyl-CoA. This chain is Acetyl-coenzyme A carboxylase carboxyl transferase subunit alpha, found in Listeria monocytogenes serovar 1/2a (strain ATCC BAA-679 / EGD-e).